Consider the following 510-residue polypeptide: NAD(P)H-quinone oxidoreductase subunit 2, chloroplastic (510 aa).

Helical transmembrane passes span Leu-24–Leu-44, Trp-59–Trp-79, Ile-99–Ile-119, Met-124–Cys-144, Leu-149–Tyr-169, Leu-184–Leu-204, Ile-229–Phe-249, Trp-295–Ile-315, Met-323–Asp-343, Gly-347–Ala-367, Ala-395–Phe-415, and Leu-418–Leu-438.

The protein belongs to the complex I subunit 2 family. NDH is composed of at least 16 different subunits, 5 of which are encoded in the nucleus.

Its subcellular location is the plastid. The protein localises to the chloroplast thylakoid membrane. It catalyses the reaction a plastoquinone + NADH + (n+1) H(+)(in) = a plastoquinol + NAD(+) + n H(+)(out). The catalysed reaction is a plastoquinone + NADPH + (n+1) H(+)(in) = a plastoquinol + NADP(+) + n H(+)(out). Its function is as follows. NDH shuttles electrons from NAD(P)H:plastoquinone, via FMN and iron-sulfur (Fe-S) centers, to quinones in the photosynthetic chain and possibly in a chloroplast respiratory chain. The immediate electron acceptor for the enzyme in this species is believed to be plastoquinone. Couples the redox reaction to proton translocation, and thus conserves the redox energy in a proton gradient. The polypeptide is NAD(P)H-quinone oxidoreductase subunit 2, chloroplastic (Muilla maritima (Sea muilla)).